A 746-amino-acid polypeptide reads, in one-letter code: Protein C-mannosyl-transferase DPY19L1 (746 aa).

Positions 1–68 (MVLQARSKHR…RAGTAAPAPD (68 aa)) are disordered. Serine 28 and serine 31 each carry phosphoserine. Residues 59 to 68 (RAGTAAPAPD) are compositionally biased toward low complexity. A run of 11 helical transmembrane segments spans residues 137 to 159 (LYYSYFKTIVEAPSFLNGVWMIM), 227 to 247 (ACFYVAVIFMLNGLMMALFFI), 257 to 279 (LGGVVTVLCFFFNHGECTRVMWT), 307 to 325 (LCRGSLIALCISNVLFMLP), 331 to 350 (FVLLTQIASLFAVYVVGYID), 357 to 374 (IIYMHMISLVLCFVLMFG), 380 to 396 (TSYYASSLVIIWGMLAM), 405 to 425 (VSELSLWVIQGCGWLFGTVIL), 481 to 501 (LLLPVVLVTVAAIVRKIFNDM), 520 to 540 (GELVYHALQLLAYTALGVLIM), and 562 to 582 (LFGWLFGKVHPGAVVFAILAA).

It belongs to the dpy-19 family.

It is found in the endoplasmic reticulum membrane. It catalyses the reaction L-tryptophyl-[protein] + a di-trans,poly-cis-dolichyl beta-D-mannosyl phosphate = C-alpha-D-mannosyl-L-tryptophyl-[protein] + a di-trans,poly-cis-dolichyl phosphate + H(+). The protein operates within protein modification; protein glycosylation. In terms of biological role, C-mannosyltransferase that mediates the C-mannosylation tryptophan residues on target proteins. The reaction occurs on the luminal side of the endoplasmic reticulum and involves the transfer of a mannose unit from a dolichylphosphate mannose (Dol-P-Man) donor to an acceptor protein containing a WxxW consensus sequence. C-mannosylates the first two tryptophans in the WxxWxxWxxC sequence motif in thrombospondin (TSP) type-1 repeats of UNC5A. Regulates neurite extension during development. The sequence is that of Protein C-mannosyl-transferase DPY19L1 (Dpy19l1) from Mus musculus (Mouse).